The chain runs to 429 residues: Tyrosine--tRNA ligase (429 aa).

Tyrosine 36 lines the L-tyrosine pocket. Positions 41-50 (PTAASLHAGH) match the 'HIGH' region motif. L-tyrosine contacts are provided by tyrosine 171 and glutamine 175. A 'KMSKS' region motif is present at residues 231–235 (KFGKS). Lysine 234 provides a ligand contact to ATP. Residues 360–417 (ATIVDLLVATGLAESRGAARRTVNEGGAAVNNQKIADPDWTPADGDYLHGRWLVVRRG) enclose the S4 RNA-binding domain.

It belongs to the class-I aminoacyl-tRNA synthetase family. TyrS type 1 subfamily. Homodimer.

It is found in the cytoplasm. It catalyses the reaction tRNA(Tyr) + L-tyrosine + ATP = L-tyrosyl-tRNA(Tyr) + AMP + diphosphate + H(+). Catalyzes the attachment of tyrosine to tRNA(Tyr) in a two-step reaction: tyrosine is first activated by ATP to form Tyr-AMP and then transferred to the acceptor end of tRNA(Tyr). The chain is Tyrosine--tRNA ligase from Nocardia farcinica (strain IFM 10152).